The sequence spans 800 residues: MSRRRAHDTEDEGYDHRRNKRRRVSENQEIEDRLESLILRVGERSTSSVESNLEGLVSVLEADLGTFRLKILRILSDCAVRMPEKCTVYTTLVGLLNAKNYKFGGEFVDHMVKTFKESLKMCRWDAARYSLRFLADLVNCHVISATSLLQLLDTMIDVSNEDTVPQVRRDWFVFAVLSTLPWVGRDLYEKKESALESLLLRIEVYLNKRSKKHHNALRVWSSDAPHPQEEYLDCLWAQIRKLRQDNWAEKHIPRPYLVFDSILCEALQHNLPTIVPPPHHDNFEYPMPWVVYRMFDYTDCPDGPNLPGAHSIERFLIEEHLHHIIETYHHERKDCAAQLLSFPYKHKIPLEYCIVEVVFAELFHMPTPRYLDICYGSILIELCKLQPATLPQVLAQATEILFMRIDSMNTSCFDRFVNWFSYHLSNFKFTWSWDEWDSCLLLDGEHPRPKFIQEVLQKCLRLSYHQRITEMMPTTYAKLIPLTPVPNYKYANEEAANLPGTTVAHQLVVAIRQKCTPEEVVNILKDIPNSGYSGEEMSDGSFNALKIDVFVQTLLNLGSKSFSHSFAAISKFHSVFRALAETEEAQICILHNIFELWSSHQQMMVVLIDKLLKLQIVDCSAVATWIFSKEMTGEFTKLYLWEILHLTIKKMNKHVIKLNTELSEAKEKLAKADSSSSDSEDDSSHKRKKPITHADKPSEEVVERMEEKLEAANVNQKRLFLIVFQRFIMILSEHLLRSDTDGRDPDTDWYRWTIGRLQQVFLMHHEQVQKYSSTLETLLFTSDLDTHILEVFQQFVALRA.

Residues 1–26 are disordered; that stretch reads MSRRRAHDTEDEGYDHRRNKRRRVSE. Thr-9 bears the Phosphothreonine mark. The MIF4G domain maps to 31-243; the sequence is EDRLESLILR…CLWAQIRKLR (213 aa). Positions 669 to 700 are disordered; that stretch reads LAKADSSSSDSEDDSSHKRKKPITHADKPSEE.

Belongs to the NCBP1 family. In terms of assembly, component of the nuclear cap-binding complex (CBC), a heterodimer composed of Cbp80 and Cbp20 that interacts with m7GpppG-capped RNA.

The protein resides in the nucleus. In terms of biological role, component of the cap-binding complex (CBC), which binds cotranscriptionally to the 5'-cap of pre-mRNAs and is involved in various processes such as pre-mRNA splicing and RNA-mediated gene silencing (RNAi). The CBC complex is involved in miRNA-mediated RNA interference via its interaction with Ars2 and is required for primary microRNAs (miRNAs) processing. Also involved in innate immunity via the short interfering RNAs (siRNAs) processing machinery by restricting the viral RNA production. In the CBC complex, Cbp80 does not bind directly capped RNAs (m7GpppG-capped RNA) but is required to stabilize the movement of the N-terminal loop of Cbp20 and lock the CBC into a high affinity cap-binding state with the cap structure. The chain is Nuclear cap-binding protein subunit 1 (Cbp80) from Drosophila melanogaster (Fruit fly).